We begin with the raw amino-acid sequence, 84 residues long: U2-theraphotoxin-Cg1b 2 (84 aa).

A signal peptide spans 1 to 21; that stretch reads MKVSVLITLAVLGVMFLLTSA. Residues 22–48 constitute a propeptide that is removed on maturation; the sequence is EERGSDQMDSPAWLKSMEIIFQSEERE. 3 disulfide bridges follow: Cys49-Cys63, Cys56-Cys68, and Cys62-Cys76.

This sequence belongs to the neurotoxin 10 (Hwtx-1) family. 06 (F4b) subfamily. Expressed by the venom gland.

The protein resides in the secreted. In terms of biological role, probable ion channel inhibitor. The sequence is that of U2-theraphotoxin-Cg1b 2 from Chilobrachys guangxiensis (Chinese earth tiger tarantula).